A 136-amino-acid chain; its full sequence is ATP synthase epsilon chain (136 aa).

It belongs to the ATPase epsilon chain family. In terms of assembly, F-type ATPases have 2 components, CF(1) - the catalytic core - and CF(0) - the membrane proton channel. CF(1) has five subunits: alpha(3), beta(3), gamma(1), delta(1), epsilon(1). CF(0) has three main subunits: a, b and c.

It localises to the cell inner membrane. Produces ATP from ADP in the presence of a proton gradient across the membrane. The protein is ATP synthase epsilon chain of Agrobacterium fabrum (strain C58 / ATCC 33970) (Agrobacterium tumefaciens (strain C58)).